The sequence spans 163 residues: Ubiquitin-like protein 1-ribosomal protein eS31 fusion protein (163 aa).

The Ubiquitin-like domain maps to 1–70 (MVFVKTLHRT…IYVNLELLGG (70 aa)). G70 is covalently cross-linked (Glycyl lysine isopeptide (Gly-Lys) (interchain with K-? in acceptor proteins)). Residues 115 to 138 (CQQPSCGGGVFMAQHANRHYCGRC) form a C4-type zinc finger.

This sequence in the N-terminal section; belongs to the ubiquitin family. In the C-terminal section; belongs to the eukaryotic ribosomal protein eS31 family.

This is Ubiquitin-like protein 1-ribosomal protein eS31 fusion protein from Caenorhabditis elegans.